Here is a 262-residue protein sequence, read N- to C-terminus: Cytochrome c oxidase subunit 3 (262 aa).

7 consecutive transmembrane segments (helical) span residues 16–36 (PWPLTGAIGAMTTVTGLVQWF), 42–59 (TLFLLGNIITMLTMYQWW), 83–103 (GMILFIISEVFFFISFFWAFF), 128–148 (FQIPLLNTAILLASGVTVTWA), 163–183 (SLFFTVLLGIYFSILQAYEYI), 198–218 (FFVATGFHGLHVLIGTSFLLI), and 240–260 (AWYWHFVDVVWLFLYISIYWW).

It belongs to the cytochrome c oxidase subunit 3 family. As to quaternary structure, component of the cytochrome c oxidase (complex IV, CIV), a multisubunit enzyme composed of a catalytic core of 3 subunits and several supernumerary subunits. The complex exists as a monomer or a dimer and forms supercomplexes (SCs) in the inner mitochondrial membrane with ubiquinol-cytochrome c oxidoreductase (cytochrome b-c1 complex, complex III, CIII).

The protein localises to the mitochondrion inner membrane. It carries out the reaction 4 Fe(II)-[cytochrome c] + O2 + 8 H(+)(in) = 4 Fe(III)-[cytochrome c] + 2 H2O + 4 H(+)(out). Its function is as follows. Component of the cytochrome c oxidase, the last enzyme in the mitochondrial electron transport chain which drives oxidative phosphorylation. The respiratory chain contains 3 multisubunit complexes succinate dehydrogenase (complex II, CII), ubiquinol-cytochrome c oxidoreductase (cytochrome b-c1 complex, complex III, CIII) and cytochrome c oxidase (complex IV, CIV), that cooperate to transfer electrons derived from NADH and succinate to molecular oxygen, creating an electrochemical gradient over the inner membrane that drives transmembrane transport and the ATP synthase. Cytochrome c oxidase is the component of the respiratory chain that catalyzes the reduction of oxygen to water. Electrons originating from reduced cytochrome c in the intermembrane space (IMS) are transferred via the dinuclear copper A center (CU(A)) of subunit 2 and heme A of subunit 1 to the active site in subunit 1, a binuclear center (BNC) formed by heme A3 and copper B (CU(B)). The BNC reduces molecular oxygen to 2 water molecules using 4 electrons from cytochrome c in the IMS and 4 protons from the mitochondrial matrix. This is Cytochrome c oxidase subunit 3 from Aedes aegypti (Yellowfever mosquito).